The primary structure comprises 465 residues: Endo-1,3-1,4-beta-glycanase EglC (465 aa).

3 Hemolysin-type calcium-binding repeats span residues 33–50 (YGTA…VDVT), 105–122 (FGNS…SQTI), and 123–140 (NGGA…ADTF). The region spanning 213–462 (LDRSVLTQTF…YVKAYSLDAD (250 aa)) is the GH16 domain. The active-site Nucleophile is E349. E354 (proton donor) is an active-site residue.

This sequence belongs to the glycosyl hydrolase 16 family.

The protein localises to the secreted. It participates in glycan metabolism; exopolysaccharide biosynthesis. In terms of biological role, cleaves high molecular weight succinoglycan to yield LMW succinoglycan. Dynamically regulates the molecular weight distribution of succinoglycan by cleaving nascent succinoglycan only during a limited period after its synthesis, perhaps before it undergoes a time-dependent change in its conformation or aggregation state. The sequence is that of Endo-1,3-1,4-beta-glycanase EglC (eglC) from Rhizobium meliloti (strain 1021) (Ensifer meliloti).